Reading from the N-terminus, the 98-residue chain is MEQLPEDQGPQREPYNEWTLEILEELKREAVRHFPRDWLHQLGQHIYTTYGDTWAGVEAIIRILQQLLFIHYRIGCHHSRIGININQQRRRRNGANRS.

Positions Met-1–Leu-42 are homooligomerization. Phosphoserine; by host occurs at positions 79 and 98.

This sequence belongs to the HIV-1 VPR protein family. As to quaternary structure, homooligomer, may form homodimer. Interacts with p6-gag region of the Pr55 Gag precursor protein through a (Leu-X-X)4 motif near the C-terminus of the P6gag protein. Interacts with host UNG. May interact with host RAD23A/HHR23A. Interacts with host VPRBP/DCAF1, leading to hijack the CUL4A-RBX1-DDB1-DCAF1/VPRBP complex, mediating ubiquitination of host proteins such as TERT and ZGPAT and arrest of the cell cycle in G2 phase. Phosphorylated on several residues by host. These phosphorylations regulate VPR activity for the nuclear import of the HIV-1 pre-integration complex.

It localises to the virion. The protein localises to the host nucleus. It is found in the host extracellular space. Its function is as follows. During virus replication, may deplete host UNG protein, and incude G2-M cell cycle arrest. Acts by targeting specific host proteins for degradation by the 26S proteasome, through association with the cellular CUL4A-DDB1 E3 ligase complex by direct interaction with host VPRPB/DCAF-1. Cell cycle arrest reportedly occurs within hours of infection and is not blocked by antiviral agents, suggesting that it is initiated by the VPR carried into the virion. Additionally, VPR induces apoptosis in a cell cycle dependent manner suggesting that these two effects are mechanistically linked. Detected in the serum and cerebrospinal fluid of AIDS patient, VPR may also induce cell death to bystander cells. Functionally, during virus entry, plays a role in the transport of the viral pre-integration (PIC) complex to the host nucleus. This function is crucial for viral infection of non-dividing macrophages. May act directly at the nuclear pore complex, by binding nucleoporins phenylalanine-glycine (FG)-repeat regions. This chain is Protein Vpr, found in Pan troglodytes (Chimpanzee).